Consider the following 262-residue polypeptide: 14-3-3 protein epsilon (262 aa).

The interval 236-262 is disordered; that stretch reads QAEEVDPNAGDGEPKEQIQDVEDQDVS. Ser-262 carries the phosphoserine modification.

The protein belongs to the 14-3-3 family. As to quaternary structure, homodimer. Interacts with phosphorylated yki. Interacts with pav (when serine phosphorylated); the interaction is necessary for association of the complex pav-14-3-3epsilon complex to the microtubules, thereby inhibiting microtubule sliding.

In terms of biological role, positively regulates Ras-mediated pathways. Acts downstream or parallel to Raf, but upstream of nuclear factors in Ras signaling. Three mutants have been isolated, that suppress the rough eye phenotype caused by mutated Ras1 (sev-Ras1 v12). Inhibits yki activity by restricting its nuclear localization. Together with pav, has a role in the inhibition of microtubule sliding during neurite outgrowth. This chain is 14-3-3 protein epsilon (14-3-3epsilon), found in Drosophila melanogaster (Fruit fly).